The following is a 765-amino-acid chain: Periplasmic beta-glucosidase (765 aa).

The first 20 residues, 1-20 (MKWLCSVGIAVSLALQPALA), serve as a signal peptide directing secretion. The active site involves Asp287.

This sequence belongs to the glycosyl hydrolase 3 family.

It is found in the periplasm. It catalyses the reaction Hydrolysis of terminal, non-reducing beta-D-glucosyl residues with release of beta-D-glucose.. The polypeptide is Periplasmic beta-glucosidase (bglX) (Escherichia coli (strain K12)).